Here is a 633-residue protein sequence, read N- to C-terminus: Carbon monoxide dehydrogenase 2 (633 aa).

[4Fe-4S] cluster contacts are provided by Cys44, Cys53, Cys56, Cys61, and Cys73. [Ni-4Fe-5S] cluster is bound by residues His264, Cys343, Cys453, Cys484, and Cys525.

This sequence belongs to the Ni-containing carbon monoxide dehydrogenase family. As to quaternary structure, homodimer. The cofactor is [4Fe-4S] cluster. [Ni-4Fe-5S] cluster is required as a cofactor.

The catalysed reaction is CO + 2 oxidized [2Fe-2S]-[ferredoxin] + H2O = 2 reduced [2Fe-2S]-[ferredoxin] + CO2 + 2 H(+). Its function is as follows. CODH oxidizes carbon monoxide coupled, via CooF, to the reduction of a hydrogen cation by a hydrogenase (possibly CooH). This Methanosarcina acetivorans (strain ATCC 35395 / DSM 2834 / JCM 12185 / C2A) protein is Carbon monoxide dehydrogenase 2 (cooS2).